We begin with the raw amino-acid sequence, 201 residues long: 3-isopropylmalate dehydratase small subunit (201 aa).

This sequence belongs to the LeuD family. LeuD type 1 subfamily. As to quaternary structure, heterodimer of LeuC and LeuD.

It carries out the reaction (2R,3S)-3-isopropylmalate = (2S)-2-isopropylmalate. It functions in the pathway amino-acid biosynthesis; L-leucine biosynthesis; L-leucine from 3-methyl-2-oxobutanoate: step 2/4. Catalyzes the isomerization between 2-isopropylmalate and 3-isopropylmalate, via the formation of 2-isopropylmaleate. In Sinorhizobium medicae (strain WSM419) (Ensifer medicae), this protein is 3-isopropylmalate dehydratase small subunit.